The chain runs to 389 residues: Na(+)/H(+) antiporter NhaA (389 aa).

11 helical membrane passes run 14–34, 59–79, 95–115, 124–144, 154–174, 177–197, 213–233, 261–281, 290–310, 328–348, and 363–383; these read AGGILLLVAVVFAMLMANSPL, LLLWINDGLMALFFLLIGLEV, SLPSFAAIGGMLVPAGIYLLF, AGWAIPAATDIAFALGIMALL, VFLLALAIIDDLGVIVIIALF, SDLSTISLAIASVAILGLVGL, LILWVAVLKSGVHATLAGVII, FLILPVFAFANAGVALGNMSL, IGIALGLILGKPIGVMLFSFI, IAPVAAMCGIGFTMSMFIASL, and LGTLIGSFIAALVGYFWLSKV.

The protein belongs to the NhaA Na(+)/H(+) (TC 2.A.33) antiporter family.

It localises to the cell inner membrane. The catalysed reaction is Na(+)(in) + 2 H(+)(out) = Na(+)(out) + 2 H(+)(in). Na(+)/H(+) antiporter that extrudes sodium in exchange for external protons. This is Na(+)/H(+) antiporter NhaA from Shewanella sp. (strain W3-18-1).